The primary structure comprises 147 residues: 3-hydroxyacyl-[acyl-carrier-protein] dehydratase FabZ (147 aa).

His-50 is a catalytic residue.

Belongs to the thioester dehydratase family. FabZ subfamily.

The protein resides in the cytoplasm. The enzyme catalyses a (3R)-hydroxyacyl-[ACP] = a (2E)-enoyl-[ACP] + H2O. Involved in unsaturated fatty acids biosynthesis. Catalyzes the dehydration of short chain beta-hydroxyacyl-ACPs and long chain saturated and unsaturated beta-hydroxyacyl-ACPs. This is 3-hydroxyacyl-[acyl-carrier-protein] dehydratase FabZ from Lactiplantibacillus plantarum (strain ATCC BAA-793 / NCIMB 8826 / WCFS1) (Lactobacillus plantarum).